A 361-amino-acid chain; its full sequence is Phosphoserine aminotransferase (361 aa).

An L-glutamate-binding site is contributed by Arg-43. Residues 77–78 (AS), Trp-103, Thr-153, Asp-173, and Gln-196 each bind pyridoxal 5'-phosphate. N6-(pyridoxal phosphate)lysine is present on Lys-197. 238-239 (NT) serves as a coordination point for pyridoxal 5'-phosphate.

It belongs to the class-V pyridoxal-phosphate-dependent aminotransferase family. SerC subfamily. As to quaternary structure, homodimer. The cofactor is pyridoxal 5'-phosphate.

The protein resides in the cytoplasm. It carries out the reaction O-phospho-L-serine + 2-oxoglutarate = 3-phosphooxypyruvate + L-glutamate. The catalysed reaction is 4-(phosphooxy)-L-threonine + 2-oxoglutarate = (R)-3-hydroxy-2-oxo-4-phosphooxybutanoate + L-glutamate. It participates in amino-acid biosynthesis; L-serine biosynthesis; L-serine from 3-phospho-D-glycerate: step 2/3. It functions in the pathway cofactor biosynthesis; pyridoxine 5'-phosphate biosynthesis; pyridoxine 5'-phosphate from D-erythrose 4-phosphate: step 3/5. Catalyzes the reversible conversion of 3-phosphohydroxypyruvate to phosphoserine and of 3-hydroxy-2-oxo-4-phosphonooxybutanoate to phosphohydroxythreonine. The chain is Phosphoserine aminotransferase from Pseudomonas fluorescens (strain SBW25).